The primary structure comprises 83 residues: MEGNIQLALICVGAALSIGLAGLGAGIGIGSVGQGACMGLARNPEVQPKLMVFMILGMALAESIAIYGLVISLILLYANPLLG.

A run of 2 helical transmembrane segments spans residues 9–29 (LICV…GIGI) and 51–71 (MVFM…GLVI).

This sequence belongs to the ATPase C chain family. As to quaternary structure, F-type ATPases have 2 components, F(1) - the catalytic core - and F(0) - the membrane proton channel. F(1) has five subunits: alpha(3), beta(3), gamma(1), delta(1), epsilon(1). F(0) has three main subunits: a(1), b(2) and c(10-14). The alpha and beta chains form an alternating ring which encloses part of the gamma chain. F(1) is attached to F(0) by a central stalk formed by the gamma and epsilon chains, while a peripheral stalk is formed by the delta and b chains.

It is found in the cell inner membrane. F(1)F(0) ATP synthase produces ATP from ADP in the presence of a proton or sodium gradient. F-type ATPases consist of two structural domains, F(1) containing the extramembraneous catalytic core and F(0) containing the membrane proton channel, linked together by a central stalk and a peripheral stalk. During catalysis, ATP synthesis in the catalytic domain of F(1) is coupled via a rotary mechanism of the central stalk subunits to proton translocation. Functionally, key component of the F(0) channel; it plays a direct role in translocation across the membrane. A homomeric c-ring of between 10-14 subunits forms the central stalk rotor element with the F(1) delta and epsilon subunits. The sequence is that of ATP synthase subunit c from Desulfotalea psychrophila (strain LSv54 / DSM 12343).